The chain runs to 209 residues: NAD(P)H dehydrogenase (quinone) (209 aa).

Residues 4 to 199 (VNIIFHSVHA…EMARYQGRHV (196 aa)) enclose the Flavodoxin-like domain. FMN-binding positions include 10–15 (SVHAHI) and 87–89 (TRY). Substrate is bound at residue W107. FMN-binding positions include 122–128 (SSGTQHG) and H143.

This sequence belongs to the WrbA family. FMN serves as cofactor.

The enzyme catalyses a quinone + NADH + H(+) = a quinol + NAD(+). The catalysed reaction is a quinone + NADPH + H(+) = a quinol + NADP(+). This is NAD(P)H dehydrogenase (quinone) from Methanosarcina mazei (strain ATCC BAA-159 / DSM 3647 / Goe1 / Go1 / JCM 11833 / OCM 88) (Methanosarcina frisia).